We begin with the raw amino-acid sequence, 85 residues long: Large ribosomal subunit protein bL27 (85 aa).

It belongs to the bacterial ribosomal protein bL27 family.

The chain is Large ribosomal subunit protein bL27 from Pseudomonas fluorescens (strain ATCC BAA-477 / NRRL B-23932 / Pf-5).